The primary structure comprises 301 residues: Light-independent protochlorophyllide reductase iron-sulfur ATP-binding protein (301 aa).

Positions 1–26 are disordered; the sequence is MSNGSVPVSGIGGRGDGEGSSQVHME. ATP-binding positions include 44–49 and Lys-73; that span reads GIGKST. A Mg(2+)-binding site is contributed by Ser-48. [4Fe-4S] cluster is bound by residues Cys-129 and Cys-163. 214 to 215 lines the ATP pocket; it reads NR.

Belongs to the NifH/BchL/ChlL family. Homodimer. Protochlorophyllide reductase is composed of three subunits; BchL, BchN and BchB. Requires [4Fe-4S] cluster as cofactor.

It catalyses the reaction chlorophyllide a + oxidized 2[4Fe-4S]-[ferredoxin] + 2 ADP + 2 phosphate = protochlorophyllide a + reduced 2[4Fe-4S]-[ferredoxin] + 2 ATP + 2 H2O. It participates in porphyrin-containing compound metabolism; bacteriochlorophyll biosynthesis (light-independent). Its function is as follows. Component of the dark-operative protochlorophyllide reductase (DPOR) that uses Mg-ATP and reduced ferredoxin to reduce ring D of protochlorophyllide (Pchlide) to form chlorophyllide a (Chlide). This reaction is light-independent. The L component serves as a unique electron donor to the NB-component of the complex, and binds Mg-ATP. This is Light-independent protochlorophyllide reductase iron-sulfur ATP-binding protein from Halorhodospira halophila (strain DSM 244 / SL1) (Ectothiorhodospira halophila (strain DSM 244 / SL1)).